We begin with the raw amino-acid sequence, 341 residues long: tRNA N6-adenosine threonylcarbamoyltransferase (341 aa).

Fe cation is bound by residues histidine 111 and histidine 115. Substrate-binding positions include 134–138 (LVSGG), aspartate 167, glycine 180, and asparagine 276. Aspartate 304 lines the Fe cation pocket.

The protein belongs to the KAE1 / TsaD family. Fe(2+) serves as cofactor.

The protein localises to the cytoplasm. The enzyme catalyses L-threonylcarbamoyladenylate + adenosine(37) in tRNA = N(6)-L-threonylcarbamoyladenosine(37) in tRNA + AMP + H(+). In terms of biological role, required for the formation of a threonylcarbamoyl group on adenosine at position 37 (t(6)A37) in tRNAs that read codons beginning with adenine. Is involved in the transfer of the threonylcarbamoyl moiety of threonylcarbamoyl-AMP (TC-AMP) to the N6 group of A37, together with TsaE and TsaB. TsaD likely plays a direct catalytic role in this reaction. In Alteromonas mediterranea (strain DSM 17117 / CIP 110805 / LMG 28347 / Deep ecotype), this protein is tRNA N6-adenosine threonylcarbamoyltransferase.